Reading from the N-terminus, the 539-residue chain is uncharacterized protein (539 aa).

Residues 34–63 (AASEVSPIPQERPTTSLRKPTPRVQRPATD) are disordered. The next 11 helical transmembrane spans lie at 103-123 (FATP…TTVF), 141-161 (MTAT…LDTV), 184-204 (ILLL…GILL), 244-264 (GIFH…IFLN), 277-299 (FLGA…IIYI), 325-345 (LAVP…LVTF), 360-380 (VLST…AAAA), 399-419 (THVS…ILFL), 434-454 (VVAL…ADNT), 470-490 (IGGV…AIIL), and 496-516 (WGLY…AGVE).

Belongs to the multi antimicrobial extrusion (MATE) (TC 2.A.66.1) family.

The protein resides in the vacuole membrane. This is an uncharacterized protein from Schizosaccharomyces pombe (strain 972 / ATCC 24843) (Fission yeast).